Consider the following 142-residue polypeptide: Metallothiol transferase FosB (142 aa).

Residues 5–120 (NVNHICFSVS…DGHKIELHTG (116 aa)) form the VOC domain. Positions 8, 67, and 116 each coordinate Mg(2+). The Proton donor/acceptor role is filled by glutamate 116.

It belongs to the fosfomycin resistance protein family. FosB subfamily. In terms of assembly, homodimer. It depends on Mg(2+) as a cofactor.

It is found in the cytoplasm. Its function is as follows. Metallothiol transferase which confers resistance to fosfomycin by catalyzing the addition of a thiol cofactor to fosfomycin. L-cysteine is probably the physiological thiol donor. This Staphylococcus epidermidis (strain ATCC 35984 / DSM 28319 / BCRC 17069 / CCUG 31568 / BM 3577 / RP62A) protein is Metallothiol transferase FosB.